Consider the following 275-residue polypeptide: Dermonecrotic toxin SpaSicTox-betaIIA2 (275 aa).

Histidine 5 is a catalytic residue. Positions 25 and 27 each coordinate Mg(2+). Catalysis depends on histidine 41, which acts as the Nucleophile. 2 disulfides stabilise this stretch: cysteine 45/cysteine 51 and cysteine 47/cysteine 190. Aspartate 85 provides a ligand contact to Mg(2+).

Belongs to the arthropod phospholipase D family. Class II subfamily. Requires Mg(2+) as cofactor. As to expression, expressed by the venom gland.

It localises to the secreted. It catalyses the reaction an N-(acyl)-sphingosylphosphocholine = an N-(acyl)-sphingosyl-1,3-cyclic phosphate + choline. It carries out the reaction an N-(acyl)-sphingosylphosphoethanolamine = an N-(acyl)-sphingosyl-1,3-cyclic phosphate + ethanolamine. The catalysed reaction is a 1-acyl-sn-glycero-3-phosphocholine = a 1-acyl-sn-glycero-2,3-cyclic phosphate + choline. The enzyme catalyses a 1-acyl-sn-glycero-3-phosphoethanolamine = a 1-acyl-sn-glycero-2,3-cyclic phosphate + ethanolamine. Functionally, dermonecrotic toxins cleave the phosphodiester linkage between the phosphate and headgroup of certain phospholipids (sphingolipid and lysolipid substrates), forming an alcohol (often choline) and a cyclic phosphate. This toxin acts on sphingomyelin (SM). It may also act on ceramide phosphoethanolamine (CPE), lysophosphatidylcholine (LPC) and lysophosphatidylethanolamine (LPE), but not on lysophosphatidylserine (LPS), and lysophosphatidylglycerol (LPG). It acts by transphosphatidylation, releasing exclusively cyclic phosphate products as second products. Induces dermonecrosis, hemolysis, increased vascular permeability, edema, inflammatory response, and platelet aggregation. This chain is Dermonecrotic toxin SpaSicTox-betaIIA2, found in Sicarius patagonicus (Six-eyed sand spider).